We begin with the raw amino-acid sequence, 546 residues long: Probable protein kinase UbiB (546 aa).

Residues D124–F502 form the Protein kinase domain. Residues L130 to V138 and K153 contribute to the ATP site. Catalysis depends on D288, which acts as the Proton acceptor. A run of 2 helical transmembrane segments spans residues Y501–P521 and E522–W542.

Belongs to the ABC1 family. UbiB subfamily.

It localises to the cell inner membrane. Its pathway is cofactor biosynthesis; ubiquinone biosynthesis [regulation]. Functionally, is probably a protein kinase regulator of UbiI activity which is involved in aerobic coenzyme Q (ubiquinone) biosynthesis. The chain is Probable protein kinase UbiB from Escherichia coli (strain SMS-3-5 / SECEC).